The chain runs to 427 residues: MAP kinase-interacting serine/threonine-protein kinase 1 (427 aa).

A compositionally biased stretch (basic and acidic residues) spans 1 to 11; sequence MVSSQKLEKPI. The tract at residues 1 to 37 is disordered; the sequence is MVSSQKLEKPIEMGSSEPLPIVDSDKRRKKKRKTRAT. T34 bears the Phosphothreonine; by PAK2 mark. A Phosphoserine; by PAK2 modification is found at S39. In terms of domain architecture, Protein kinase spans 49 to 333; sequence QLTSELLGEG…AAQVLQHPWV (285 aa). Residues 55–63 and K78 each bind ATP; that span reads LGEGAYAKV. Residue D170 is the Proton acceptor of the active site. 2 positions are modified to phosphoserine: S180 and S185. Residues T209, T214, and T344 each carry the phosphothreonine modification. The interval 407-427 is disordered; that stretch reads RALAQAGRSRDANPCLTPAGL.

The protein belongs to the protein kinase superfamily. CAMK Ser/Thr protein kinase family. Interacts with the C-terminal regions of EIF4G1 and EIF4G2. Also binds to dephosphorylated ERK1 and ERK2, and to the p38 kinases. It depends on Mg(2+) as a cofactor. In terms of processing, dual phosphorylation of Thr-209 and Thr-214 activates the kinase. Phosphorylation of Thr-344 activates the kinase. MAPK3/ERK1 is one of the kinases which activate MKNK1/MNK1. Phosphorylation by PAK2 leads to a reduced phosphorylation of EIF4G1. Ubiquitously expressed in all tissues examined, with high levels in skeletal muscle.

The catalysed reaction is L-seryl-[protein] + ATP = O-phospho-L-seryl-[protein] + ADP + H(+). The enzyme catalyses L-threonyl-[protein] + ATP = O-phospho-L-threonyl-[protein] + ADP + H(+). Its activity is regulated as follows. Phosphorylated and activated by the p38 kinases and kinases in the Erk pathway. May play a role in the response to environmental stress and cytokines. Appears to regulate translation by phosphorylating EIF4E, thus increasing the affinity of this protein for the 7-methylguanosine-containing mRNA cap. The chain is MAP kinase-interacting serine/threonine-protein kinase 1 (Mknk1) from Mus musculus (Mouse).